Here is a 137-residue protein sequence, read N- to C-terminus: Histone H2B.1, sperm (137 aa).

Residues Met1–Arg43 form a disordered region. Short sequence motifs (SPKK motif) lie at residues Ser6–Lys9, Ser11–Lys14, and Ser16–Lys19. Residues Pro7–Arg43 are compositionally biased toward basic residues. 2 positions are modified to phosphoserine: Ser11 and Ser16. Ser124 carries O-linked (GlcNAc) serine glycosylation. Lys132 is covalently cross-linked (Glycyl lysine isopeptide (Lys-Gly) (interchain with G-Cter in ubiquitin)).

This sequence belongs to the histone H2B family. In terms of assembly, the nucleosome is a histone octamer containing two molecules each of H2A, H2B, H3 and H4 assembled in one H3-H4 heterotetramer and two H2A-H2B heterodimers. The octamer wraps approximately 147 bp of DNA. Post-translationally, monoubiquitination of Lys-132 gives a specific tag for epigenetic transcriptional activation and is also prerequisite for histone H3 'Lys-4' and 'Lys-79' methylation. Phosphorylated on SPKK motifs 2 and 3; which may regulate DNA binding. Dephosphorylated during maturation of spermatids to mature sperm and rephosphorylated at fertilization. In terms of processing, glcNAcylation at Ser-124 promotes monoubiquitination of Lys-132. It fluctuates in response to extracellular glucose, and associates with transcribed genes.

It is found in the nucleus. It localises to the chromosome. Functionally, core component of nucleosome. Nucleosomes wrap and compact DNA into chromatin, limiting DNA accessibility to the cellular machineries which require DNA as a template. Histones thereby play a central role in transcription regulation, DNA repair, DNA replication and chromosomal stability. DNA accessibility is regulated via a complex set of post-translational modifications of histones, also called histone code, and nucleosome remodeling. The polypeptide is Histone H2B.1, sperm (Psammechinus miliaris (Green sea urchin)).